Reading from the N-terminus, the 677-residue chain is Methionine--tRNA ligase (677 aa).

A 'HIGH' region motif is present at residues 15-25; the sequence is PYANGSIHLGH. 4 residues coordinate Zn(2+): C146, C149, C159, and C162. The short motif at 333–337 is the 'KMSKS' region element; sequence KMSKS. K336 lines the ATP pocket. Residues 575 to 677 enclose the tRNA-binding domain; it reads DFAKVDLRVA…AGAKPGHQVK (103 aa).

The protein belongs to the class-I aminoacyl-tRNA synthetase family. MetG type 1 subfamily. As to quaternary structure, homodimer. Requires Zn(2+) as cofactor.

It localises to the cytoplasm. The catalysed reaction is tRNA(Met) + L-methionine + ATP = L-methionyl-tRNA(Met) + AMP + diphosphate. Functionally, is required not only for elongation of protein synthesis but also for the initiation of all mRNA translation through initiator tRNA(fMet) aminoacylation. This chain is Methionine--tRNA ligase (metG), found in Escherichia coli (strain K12).